The sequence spans 225 residues: UPF0758 protein Mhun_2739 (225 aa).

In terms of domain architecture, MPN spans 102 to 225 (RITEPDHILK…VTSLRSLGYL (124 aa)). H174, H176, and D187 together coordinate Zn(2+). The short motif at 174-187 (HNHPSGNPEPSSED) is the JAMM motif element.

This sequence belongs to the UPF0758 family.

This chain is UPF0758 protein Mhun_2739, found in Methanospirillum hungatei JF-1 (strain ATCC 27890 / DSM 864 / NBRC 100397 / JF-1).